Reading from the N-terminus, the 62-residue chain is Small acidic protein 1 (62 aa).

As to quaternary structure, interacts with the COP9 signalosome. As to expression, expressed in roots, flowers, siliques, stems, leaves and seeds. In flowers, detected in petals, anthers and pistils.

In terms of biological role, mediates responses to the synthetic auxin 2,4-dichlorophenoxyacetic acid (2,4-D). Not involved in the response to indole-3-acetic acid (IAA). Interacts with RUB modification-related components and may regulate the cullin-ring ubiquitin E3 ligase complex (CRL) activity. This is Small acidic protein 1 (SMAP1) from Arabidopsis thaliana (Mouse-ear cress).